We begin with the raw amino-acid sequence, 129 residues long: Protein HMF1 (129 aa).

A Glycyl lysine isopeptide (Lys-Gly) (interchain with G-Cter in ubiquitin) cross-link involves residue Lys-52.

It belongs to the RutC family.

The protein resides in the cytoplasm. The protein localises to the nucleus. It is found in the mitochondrion intermembrane space. This Saccharomyces cerevisiae (strain ATCC 204508 / S288c) (Baker's yeast) protein is Protein HMF1 (HMF1).